The chain runs to 972 residues: Multiple C2 domain and transmembrane region protein 8 (972 aa).

In terms of domain architecture, C2 1 spans 1–107 (MMSNLKLGVE…PYSEAVGLPY (107 aa)). Residues 142–203 (PNLISTKKIP…MMESSLYQAP (62 aa)) are disordered. Basic residues predominate over residues 150-159 (IPSKSRHKFH). Over residues 161–173 (IPTNESNHSPRGN) the composition is skewed to polar residues. Positions 179–194 (PQPPPPQSQTALPPPM) are enriched in pro residues. C2 domains are found at residues 232 to 352 (GGGK…PEWY), 384 to 507 (ALNA…NRWF), and 543 to 669 (YSSD…SHSY). Residues Asp265, Asp271, Asp318, Asp320, and Asp325 each coordinate Ca(2+). Helical transmembrane passes span 803-823 (IIFL…SLCL) and 924-944 (TVVL…LYIM).

It belongs to the MCTP family. Requires Ca(2+) as cofactor. Expressed in root hairs.

Its subcellular location is the membrane. It localises to the vesicle. In terms of biological role, may function as a signaling molecule by regulating the trafficking of other regulators. This is Multiple C2 domain and transmembrane region protein 8 from Arabidopsis thaliana (Mouse-ear cress).